Consider the following 95-residue polypeptide: Small ribosomal subunit protein bS6 (95 aa).

This sequence belongs to the bacterial ribosomal protein bS6 family.

Its function is as follows. Binds together with bS18 to 16S ribosomal RNA. The polypeptide is Small ribosomal subunit protein bS6 (Exiguobacterium sibiricum (strain DSM 17290 / CCUG 55495 / CIP 109462 / JCM 13490 / 255-15)).